The following is a 583-amino-acid chain: Arginine--tRNA ligase (583 aa).

Positions 121–131 (ANPTGPLHLGH) match the 'HIGH' region motif.

It belongs to the class-I aminoacyl-tRNA synthetase family. Monomer.

The protein resides in the cytoplasm. The catalysed reaction is tRNA(Arg) + L-arginine + ATP = L-arginyl-tRNA(Arg) + AMP + diphosphate. The polypeptide is Arginine--tRNA ligase (argS) (Aquifex aeolicus (strain VF5)).